The primary structure comprises 601 residues: Translation initiation factor IF-2 (601 aa).

The segment at 54-101 (GHTASAEPAPAQASGSPASPAQTEAQEAPQPTATATAEREPAAPPARE) is disordered. The segment covering 57 to 89 (ASAEPAPAQASGSPASPAQTEAQEAPQPTATAT) has biased composition (low complexity). A tr-type G domain is found at 104 to 273 (HRAPVVTIMG…SLTAELEDLR (170 aa)). The tract at residues 113–120 (GHVDHGKT) is G1. 113–120 (GHVDHGKT) contacts GTP. The tract at residues 138–142 (GITQH) is G2. The G3 stretch occupies residues 159-162 (DTPG). GTP contacts are provided by residues 159–163 (DTPGH) and 213–216 (NKVD). Residues 213–216 (NKVD) are G4. The tract at residues 249 to 251 (SAK) is G5.

The protein belongs to the TRAFAC class translation factor GTPase superfamily. Classic translation factor GTPase family. IF-2 subfamily.

The protein localises to the cytoplasm. Functionally, one of the essential components for the initiation of protein synthesis. Protects formylmethionyl-tRNA from spontaneous hydrolysis and promotes its binding to the 30S ribosomal subunits. Also involved in the hydrolysis of GTP during the formation of the 70S ribosomal complex. The chain is Translation initiation factor IF-2 from Deinococcus geothermalis (strain DSM 11300 / CIP 105573 / AG-3a).